A 390-amino-acid chain; its full sequence is Na(+)/H(+) antiporter NhaA 1 (390 aa).

A run of 11 helical transmembrane segments spans residues 14–34 (SGIL…NGVL), 59–79 (TILW…GLEL), 94–114 (VALP…IFYV), 125–145 (GWAI…FLLG), 154–174 (LFLL…IAIF), 179–199 (LSII…ILNY), 205–225 (IYIY…SGIH), 260–280 (PIVA…VVFS), 295–315 (IIFG…FLAI), 328–348 (WLHL…SLFI), and 362–382 (ANKI…YFVL).

This sequence belongs to the NhaA Na(+)/H(+) (TC 2.A.33) antiporter family.

It is found in the cell inner membrane. The enzyme catalyses Na(+)(in) + 2 H(+)(out) = Na(+)(out) + 2 H(+)(in). Functionally, na(+)/H(+) antiporter that extrudes sodium in exchange for external protons. The protein is Na(+)/H(+) antiporter NhaA 1 of Campylobacter fetus subsp. fetus (strain 82-40).